The primary structure comprises 407 residues: Phosphopentomutase (407 aa).

Residues Asp11, Asp305, His310, Asp346, His347, and His358 each coordinate Mn(2+).

Belongs to the phosphopentomutase family. Mn(2+) is required as a cofactor.

The protein resides in the cytoplasm. It catalyses the reaction 2-deoxy-alpha-D-ribose 1-phosphate = 2-deoxy-D-ribose 5-phosphate. The catalysed reaction is alpha-D-ribose 1-phosphate = D-ribose 5-phosphate. It functions in the pathway carbohydrate degradation; 2-deoxy-D-ribose 1-phosphate degradation; D-glyceraldehyde 3-phosphate and acetaldehyde from 2-deoxy-alpha-D-ribose 1-phosphate: step 1/2. Isomerase that catalyzes the conversion of deoxy-ribose 1-phosphate (dRib-1-P) and ribose 1-phosphate (Rib-1-P) to deoxy-ribose 5-phosphate (dRib-5-P) and ribose 5-phosphate (Rib-5-P), respectively. The chain is Phosphopentomutase from Legionella pneumophila subsp. pneumophila (strain Philadelphia 1 / ATCC 33152 / DSM 7513).